The sequence spans 839 residues: Taste receptor type 1 member 2 (839 aa).

Residues 1 to 19 form the signal peptide; it reads MGTRATTICSLFFLLWVLA. Residues 20–566 are Extracellular-facing; the sequence is EPAENSDFYL…VFLEWHEAPT (547 aa). N-linked (GlcNAc...) asparagine glycans are attached at residues Asn-84, Asn-248, Asn-292, Asn-312, Asn-368, Asn-407, Asn-428, Asn-487, and Asn-527. The chain crosses the membrane as a helical span at residues 567 to 587; sequence IAVALLAALGFLSTLAILVIF. Residues 588-602 are Cytoplasmic-facing; the sequence is WRHFQTPIVRSAGGP. Residues 603–623 form a helical membrane-spanning segment; it reads MCFLMLTLLLVAYMVVPVYVG. Over 624–635 the chain is Extracellular; the sequence is PPKVSTCLCRQA. A helical membrane pass occupies residues 636–656; it reads LFPLCFTICISCIAVRSFQIV. At 657–681 the chain is on the cytoplasmic side; that stretch reads CAFKMASRFPRAYSYWVRYQGPYVS. A helical transmembrane segment spans residues 682 to 702; the sequence is MAFITVLKMVIVVIGMLATGL. Over 703–727 the chain is Extracellular; it reads SPTTRTDPDDPKITIVSCNPNYRNS. A helical transmembrane segment spans residues 728–748; the sequence is LLFNTSLDLLLSVVGFSFAYM. Over 749–760 the chain is Cytoplasmic; sequence GKELPTNYNEAK. Residues 761-781 traverse the membrane as a helical segment; it reads FITLSMTFYFTSSVSLCTFMS. At 782–784 the chain is on the extracellular side; it reads AYS. The chain crosses the membrane as a helical span at residues 785–805; the sequence is GVLVTIVDLLVTVLNLLAISL. Residues 806–839 lie on the Cytoplasmic side of the membrane; it reads GYFGPKCYMILFYPERNTPAYFNSMIQGYTMRRD.

Belongs to the G-protein coupled receptor 3 family. TAS1R subfamily. Forms heterodimers with TAS1R3.

Its subcellular location is the cell membrane. In terms of biological role, putative taste receptor. TAS1R2/TAS1R3 recognizes diverse natural and synthetic sweeteners. The sequence is that of Taste receptor type 1 member 2 (TAS1R2) from Gorilla gorilla gorilla (Western lowland gorilla).